Reading from the N-terminus, the 336-residue chain is Major histocompatibility complex class I-related protein 1 (336 aa).

An N-terminal signal peptide occupies residues M1–A18. Residues R19–S105 form an alpha-1 region. The antigen-binding cleft stretch occupies residues R19–T197. Residues R19–V298 are Extracellular-facing. 8-(9H-purin-6-yl)-2-oxa-8-azabicyclo[3.3.1]nona-3,6-diene-4,6-dicarbaldehyde-binding residues include Y25 and R27. 5-(2-oxoethylideneamino)-6-(D-ribitylamino)uracil-binding residues include R27, S42, and K61. 5-(2-oxopropylideneamino)-6-(D-ribitylamino)uracil-binding residues include R27, S42, and K61. 7-hydroxy-6-methyl-8-(1-D-ribityl)lumazine contacts are provided by R27, S42, and K61. 8-(9H-purin-6-yl)-2-oxa-8-azabicyclo[3.3.1]nona-3,6-diene-4,6-dicarbaldehyde contacts are provided by K61 and H76. K61 is a 2-amino-4-oxopteridine-6-carbaldehyde binding site. Residue K61 coordinates pyridoxal. The N-linked (GlcNAc...) asparagine glycan is linked to N103. The alpha-2 stretch occupies residues G106–T197. R112 provides a ligand contact to 8-(9H-purin-6-yl)-2-oxa-8-azabicyclo[3.3.1]nona-3,6-diene-4,6-dicarbaldehyde. 3 residues coordinate 5-(2-oxoethylideneamino)-6-(D-ribitylamino)uracil: R112, Y170, and Q171. 3 residues coordinate 5-(2-oxopropylideneamino)-6-(D-ribitylamino)uracil: R112, Y170, and Q171. R112, Y170, and Q171 together coordinate 7-hydroxy-6-methyl-8-(1-D-ribityl)lumazine. Disulfide bonds link C116–C179 and C218–C274. An alpha-3 region spans residues E198–Q289. The 96-residue stretch at P200 to L295 folds into the Ig-like C1-type domain. The tract at residues E290–V298 is connecting peptide. A helical membrane pass occupies residues K299–R319. At K320–H336 the chain is on the cytoplasmic side.

The protein belongs to the MHC class I family. In terms of assembly, heterotrimer that consists of MR1, B2M and metabolite antigen. Major classes of metabolite ligands presented by MR1 include riboflavin-related antigens, pyrimidines and ribityl lumazines, nucleobase adducts and folate derivatives. Forms reversible covalent Schiff base complexes with microbial pyrimidine-based metabolite, which serves as a molecular switch triggering complete folding, stable association with B2M and translocation of the ternary complex from endoplasmic reticulum to the plasma membrane. Alternatively, forms non-Schiff base complexes with ribityl lumazines. On antigen-presenting cells, the ternary complex interacts with TCR on MR1-restricted T cells. Interacts with TAPBP and TAPBPL chaperones in the endoplasmic reticulum. TAPBP associated or not with MHC class I peptide loading complex binds ligand-free MR1 or MR1-B2M complex, providing for stable MR1 pools ready for metabolite antigen processing. TAPBPL interacts with MR1 in a ligand-independent way; this interaction may stabilize MR1 pool and facilitate ligand loading and dissociation. Structurally, MR1-B2M heterodimer adopts a topology similar to classical MHC class I molecules, with alpha-1 and alpha-2 domains of MR1 forming the antigen-binding cleft composed of two alpha-helices resting on a floor of 7-stranded anti-parallel beta-pleated sheet. MR1-B2M heterodimer (via alpha-helices) interacts with TCR (via CDR domains). Post-translationally, N-glycosylated.

It localises to the cell membrane. Its subcellular location is the endoplasmic reticulum membrane. The protein localises to the golgi apparatus membrane. The protein resides in the early endosome membrane. It is found in the late endosome membrane. In terms of biological role, antigen-presenting molecule specialized in displaying microbial pyrimidine-based metabolites to alpha-beta T cell receptors (TCR) on innate-type mucosal-associated invariant T (MAIT) cells. In complex with B2M preferentially presents riboflavin-derived metabolites to semi-invariant TCRs on MAIT cells, guiding immune surveillance of the microbial metabolome at mucosal epithelial barriers. Signature pyrimidine-based microbial antigens are generated via non-enzymatic condensation of metabolite intermediates of the riboflavin pathway with by-products arising from other metabolic pathways such as glycolysis. Typical potent antigenic metabolites are 5-(2-oxoethylideneamino)-6-D-ribitylaminouracil (5-OE-RU) and 5-(2-oxopropylideneamino)-6-D-ribitylaminouracil (5-OP-RU), products of condensation of 5-amino-6-D-ribityaminouracil (5-A-RU) with glyoxal or methylglyoxal by-products, respectively. May present microbial antigens to various MAIT cell subsets, providing for unique recognition of diverse microbes, including pathogens that do not synthesize riboflavin. Upon antigen recognition, elicits rapid innate-type MAIT cell activation to eliminate pathogenic microbes by directly killing infected cells. During T cell development, drives thymic selection and post-thymic terminal differentiation of MAIT cells in a process dependent on commensal microflora. Acts as an immune sensor of cancer cell metabolome. May present a tumor-specific or -associated metabolite essential for cancer cell survival to a pan-cancer TCR on a non-MAIT CD8-positive T cell clone, triggering T cell-mediated killing of a wide range of cancer cell types. May present tumor-enriched pyridoxal and pyridoxal 5'-phosphate antigens, enabling preferential recognition of cancer cells. Presents nucleobase carbonyl adducts generated during oxidative stress. Captures M3Ade, a nucleobase adduct composed of one adenine modified by a malondialdehyde trimer, for recognition by MR1-restricted T cell clones expressing a polyclonal TCR repertoire. The chain is Major histocompatibility complex class I-related protein 1 from Bos taurus (Bovine).